A 466-amino-acid chain; its full sequence is Soluble pyridine nucleotide transhydrogenase (466 aa).

36-45 (ERYQNVGGGC) is an FAD binding site.

It belongs to the class-I pyridine nucleotide-disulfide oxidoreductase family. In terms of assembly, homooligomer; probable homooctamer. FAD serves as cofactor.

It localises to the cytoplasm. It catalyses the reaction NAD(+) + NADPH = NADH + NADP(+). Functionally, conversion of NADPH, generated by peripheral catabolic pathways, to NADH, which can enter the respiratory chain for energy generation. This Escherichia coli O157:H7 protein is Soluble pyridine nucleotide transhydrogenase.